A 179-amino-acid polypeptide reads, in one-letter code: Large ribosomal subunit protein uL5 (179 aa).

The protein belongs to the universal ribosomal protein uL5 family. In terms of assembly, part of the 50S ribosomal subunit; part of the 5S rRNA/L5/L18/L25 subcomplex. Contacts the 5S rRNA and the P site tRNA. Forms a bridge to the 30S subunit in the 70S ribosome.

Its function is as follows. This is one of the proteins that bind and probably mediate the attachment of the 5S RNA into the large ribosomal subunit, where it forms part of the central protuberance. In the 70S ribosome it contacts protein S13 of the 30S subunit (bridge B1b), connecting the 2 subunits; this bridge is implicated in subunit movement. Contacts the P site tRNA; the 5S rRNA and some of its associated proteins might help stabilize positioning of ribosome-bound tRNAs. In Burkholderia cenocepacia (strain HI2424), this protein is Large ribosomal subunit protein uL5.